The sequence spans 737 residues: NAD-dependent protein deacetylase sirtuin-1 (737 aa).

Residues 1-28 (MADEVALALQAAGSPSAAAAMEAASQPA) are compositionally biased toward low complexity. Disordered regions lie at residues 1–56 (MADE…AVAP) and 75–125 (EAAG…EAAA). Ala-2 carries the post-translational modification N-acetylalanine. Residues 2-131 (ADEVALALQA…EAAAAAAAAA (130 aa)) form an interaction with CLOCK region. Positions 2-268 (ADEVALALQA…SCGIPDFRSR (267 aa)) are interaction with H1-4. Phosphoserine occurs at positions 14 and 25. The Nuclear localization signal motif lies at 32–39 (LRKRPRRD). Ser-46 carries the phosphoserine; by MAPK8 modification. Low complexity-rich tracts occupy residues 46–56 (SPGEPSAAVAP) and 75–94 (EAAGAAASAEREAPATAVAG). Over residues 111–123 (DFDDDEGEEEDEA) the composition is skewed to acidic residues. An interaction with CCAR2 region spans residues 135 to 533 (RDNLLLTDGL…LHISEDSSSP (399 aa)). The Nuclear export signal motif lies at 138 to 145 (LLLTDGLL). Residues Ser-151, Ser-154, Ser-164, and Ser-165 each carry the phosphoserine modification. Residues 152 to 171 (CESDDDDRTSHASSSDWTPR) form a disordered region. The Nuclear localization signal signature appears at 223–230 (PPKRKKRK). In terms of domain architecture, Deacetylase sirtuin-type spans 228-488 (KRKDINTIED…NELCHRLGGE (261 aa)). Residue Lys-230 is modified to N6-acetyllysine. The tract at residues 248-251 (IIVL) is required for interaction with the sumoylated form of CCAR2. Residues 253-272 (GAGVSVSCGIPDFRSRDGIY) and 337-340 (QNID) contribute to the NAD(+) site. His-355 acts as the Proton acceptor in catalysis. Residues Cys-363 and Cys-366 each contribute to the Zn(2+) site. N6-acetyllysine is present on Lys-369. Residues Cys-387 and Cys-390 each contribute to the Zn(2+) site. 2 positions are modified to S-nitrosocysteine: Cys-387 and Cys-390. Lys-422 is modified (N6-acetyllysine). The Nuclear export signal signature appears at 425–431 (VDLLIVI). NAD(+)-binding positions include 432–434 (GSS), 457–459 (NRE), and Cys-474. Lys-505 is subject to N6-acetyllysine. Residues 514 to 539 (VHLSELPPTPLHISEDSSSPERTVPQ) form a disordered region. Thr-522 bears the Phosphothreonine; by DYRK1A, DYRK3 and MAPK8 mark. Ser-527 is modified (phosphoserine). Polar residues predominate over residues 529 to 539 (DSSSPERTVPQ). Phosphothreonine is present on Thr-536. At Lys-600 the chain carries N6-acetyllysine. Residues Ser-649 and Ser-651 each carry the phosphoserine; by CaMK2 modification. Positions 653–713 (DDVLSSSSCG…GSGFGADGGD (61 aa)) are disordered. A compositionally biased stretch (low complexity) spans 656–676 (LSSSSCGSNSDSGTCQSPSLE). The segment covering 677 to 697 (EPLEDESEIEEFYNGLEDDTE) has biased composition (acidic residues). The residue at position 737 (Ser-737) is a Phosphoserine.

The protein belongs to the sirtuin family. Class I subfamily. As to quaternary structure, interacts with XBP1 isoform 2. Found in a complex with PCAF and MYOD1 Component of the eNoSC complex, composed of SIRT1, SUV39H1 and RRP8. Interacts with HES1, HEY2 and PML. Interacts with RPS19BP1/AROS. Interacts with CCAR2 (via N-terminus); the interaction disrupts the interaction between SIRT1 and p53/TP53. Interacts with SETD7; the interaction induces the dissociation of SIRT1 from p53/TP53 and increases p53/TP53 activity. Interacts with MYCN, NR1I2, CREBZF, TSC2, TLE1, FOS, JUN, NR0B2, PPARG, NCOR, IRS1, IRS2 and NMNAT1. Interacts with HNF1A; the interaction occurs under nutrient restriction. Interacts with SUZ12; the interaction mediates the association with the PRC4 histone methylation complex which is specific as an association with PCR2 and PCR3 complex variants is not found. Interacts with FOXO1; the interaction deacetylates FOXO1, enhances its DNA-binding ability and increases its transcriptional activity. Interacts with BCL6; leads to a epigenetic repression of specific target genes. Interacts with CLOCK, BMAL1 and PER2. Interacts with PPARA; the interaction seems to be modulated by NAD(+) levels. Interacts with NR1H3 and this interaction is inhibited in the presence of CCAR2. Interacts with CHEK2 and p53/TP53. Exhibits a preferential interaction with sumoylated CCAR2 over its unmodified form. Interacts with PACS2. Interacts with SIRT7. Interacts with PUS7. Interacts with TULP3. Interacts with MORN3; the interaction enhances the ubiquitination of p53/TP53. It depends on Zn(2+) as a cofactor. Methylated on multiple lysine residues; methylation is enhanced after DNA damage and is dispensable for deacetylase activity toward p53/TP53. In terms of processing, phosphorylated. Phosphorylated by STK4/MST1, resulting in inhibition of SIRT1-mediated p53/TP53 deacetylation. Phosphorylation by MAPK8/JNK1 at Ser-46 and Thr-522 leads to increased nuclear localization and enzymatic activity. Phosphorylation at Thr-522 by DYRK1A and DYRK3 activates deacetylase activity and promotes cell survival. Phosphorylation by mammalian target of rapamycin complex 1 (mTORC1) at Ser-46 inhibits deacetylation activity. Phosphorylated by CaMK2, leading to increased p53/TP53 and NF-kappa-B p65/RELA deacetylation activity. Post-translationally, proteolytically cleaved by cathepsin B upon TNF-alpha treatment to yield catalytic inactive but stable SirtT1 75 kDa fragment (75SirT1). S-nitrosylated by GAPDH, leading to inhibit the NAD-dependent protein deacetylase activity. In terms of processing, acetylated at various Lys residues. Deacetylated via an autocatalytic mechanism. Autodeacetylation at Lys-230 promotes its protein deacetylase activity. Post-translationally, ubiquitinated; leading to degradation. Deubiquitinated by USP22; leading to stabilization. Widely expressed. Weakly expressed in liver and skeletal muscle.

The protein localises to the nucleus. It localises to the PML body. It is found in the cytoplasm. Its subcellular location is the mitochondrion. It carries out the reaction N(6)-acetyl-L-lysyl-[protein] + NAD(+) + H2O = 2''-O-acetyl-ADP-D-ribose + nicotinamide + L-lysyl-[protein]. The enzyme catalyses N(6)-propanoyl-L-lysyl-[protein] + NAD(+) + H2O = 3''-O-propanoyl-ADP-D-ribose + nicotinamide + L-lysyl-[protein]. It catalyses the reaction N(6)-(2E)-butenoyl-L-lysyl-[protein] + NAD(+) + H2O = 2''-O-(2E)-but-2-enoyl-ADP-D-ribose + nicotinamide + L-lysyl-[protein]. The catalysed reaction is N(6)-[(S)-lactoyl]-L-lysyl-[protein] + NAD(+) + H2O = 2''-O-(S)-lactoyl-ADP-D-ribose + nicotinamide + L-lysyl-[protein]. With respect to regulation, activated by resveratrol (3,5,4'-trihydroxy-trans-stilbene), butein (3,4,2',4'-tetrahydroxychalcone), piceatannol (3,5,3',4'-tetrahydroxy-trans-stilbene), Isoliquiritigenin (4,2',4'-trihydroxychalcone), fisetin (3,7,3',4'-tetrahydroxyflavone) and quercetin (3,5,7,3',4'-pentahydroxyflavone). MAPK8/JNK1 and RPS19BP1/AROS act as positive regulators of deacetylation activity. Inhibited by nicotinamide. Negatively regulated by CCAR2. In terms of biological role, NAD-dependent protein deacetylase that links transcriptional regulation directly to intracellular energetics and participates in the coordination of several separated cellular functions such as cell cycle, response to DNA damage, metabolism, apoptosis and autophagy. Can modulate chromatin function through deacetylation of histones and can promote alterations in the methylation of histones and DNA, leading to transcriptional repression. Deacetylates a broad range of transcription factors and coregulators, thereby regulating target gene expression positively and negatively. Serves as a sensor of the cytosolic ratio of NAD(+)/NADH which is altered by glucose deprivation and metabolic changes associated with caloric restriction. Is essential in skeletal muscle cell differentiation and in response to low nutrients mediates the inhibitory effect on skeletal myoblast differentiation which also involves 5'-AMP-activated protein kinase (AMPK) and nicotinamide phosphoribosyltransferase (NAMPT). Component of the eNoSC (energy-dependent nucleolar silencing) complex, a complex that mediates silencing of rDNA in response to intracellular energy status and acts by recruiting histone-modifying enzymes. The eNoSC complex is able to sense the energy status of cell: upon glucose starvation, elevation of NAD(+)/NADP(+) ratio activates SIRT1, leading to histone H3 deacetylation followed by dimethylation of H3 at 'Lys-9' (H3K9me2) by SUV39H1 and the formation of silent chromatin in the rDNA locus. Deacetylates 'Lys-266' of SUV39H1, leading to its activation. Inhibits skeletal muscle differentiation by deacetylating PCAF and MYOD1. Deacetylates H2A and 'Lys-26' of H1-4. Deacetylates 'Lys-16' of histone H4 (in vitro). Involved in NR0B2/SHP corepression function through chromatin remodeling: Recruited to LRH1 target gene promoters by NR0B2/SHP thereby stimulating histone H3 and H4 deacetylation leading to transcriptional repression. Proposed to contribute to genomic integrity via positive regulation of telomere length; however, reports on localization to pericentromeric heterochromatin are conflicting. Proposed to play a role in constitutive heterochromatin (CH) formation and/or maintenance through regulation of the available pool of nuclear SUV39H1. Upon oxidative/metabolic stress decreases SUV39H1 degradation by inhibiting SUV39H1 polyubiquitination by MDM2. This increase in SUV39H1 levels enhances SUV39H1 turnover in CH, which in turn seems to accelerate renewal of the heterochromatin which correlates with greater genomic integrity during stress response. Deacetylates 'Lys-382' of p53/TP53 and impairs its ability to induce transcription-dependent proapoptotic program and modulate cell senescence. Deacetylates TAF1B and thereby represses rDNA transcription by the RNA polymerase I. Deacetylates MYC, promotes the association of MYC with MAX and decreases MYC stability leading to compromised transformational capability. Deacetylates FOXO3 in response to oxidative stress thereby increasing its ability to induce cell cycle arrest and resistance to oxidative stress but inhibiting FOXO3-mediated induction of apoptosis transcriptional activity; also leading to FOXO3 ubiquitination and protesomal degradation. Appears to have a similar effect on MLLT7/FOXO4 in regulation of transcriptional activity and apoptosis. Deacetylates DNMT1; thereby impairs DNMT1 methyltransferase-independent transcription repressor activity, modulates DNMT1 cell cycle regulatory function and DNMT1-mediated gene silencing. Deacetylates RELA/NF-kappa-B p65 thereby inhibiting its transactivating potential and augments apoptosis in response to TNF-alpha. Deacetylates HIF1A, KAT5/TIP60, RB1 and HIC1. Deacetylates FOXO1, which increases its DNA binding ability and enhances its transcriptional activity leading to increased gluconeogenesis in liver. Inhibits E2F1 transcriptional activity and apoptotic function, possibly by deacetylation. Involved in HES1- and HEY2-mediated transcriptional repression. In cooperation with MYCN seems to be involved in transcriptional repression of DUSP6/MAPK3 leading to MYCN stabilization by phosphorylation at 'Ser-62'. Deacetylates MEF2D. Required for antagonist-mediated transcription suppression of AR-dependent genes which may be linked to local deacetylation of histone H3. Represses HNF1A-mediated transcription. Required for the repression of ESRRG by CREBZF. Deacetylates NR1H3 and NR1H2 and deacetylation of NR1H3 at 'Lys-434' positively regulates transcription of NR1H3:RXR target genes, promotes NR1H3 proteasomal degradation and results in cholesterol efflux; a promoter clearing mechanism after reach round of transcription is proposed. Involved in lipid metabolism: deacetylates LPIN1, thereby inhibiting diacylglycerol synthesis. Implicated in regulation of adipogenesis and fat mobilization in white adipocytes by repression of PPARG which probably involves association with NCOR1 and SMRT/NCOR2. Deacetylates p300/EP300 and PRMT1. Deacetylates ACSS2 leading to its activation, and HMGCS1 deacetylation. Involved in liver and muscle metabolism. Through deacetylation and activation of PPARGC1A is required to activate fatty acid oxidation in skeletal muscle under low-glucose conditions and is involved in glucose homeostasis. Involved in regulation of PPARA and fatty acid beta-oxidation in liver. Involved in positive regulation of insulin secretion in pancreatic beta cells in response to glucose; the function seems to imply transcriptional repression of UCP2. Proposed to deacetylate IRS2 thereby facilitating its insulin-induced tyrosine phosphorylation. Deacetylates SREBF1 isoform SREBP-1C thereby decreasing its stability and transactivation in lipogenic gene expression. Involved in DNA damage response by repressing genes which are involved in DNA repair, such as XPC and TP73, deacetylating XRCC6/Ku70, and facilitating recruitment of additional factors to sites of damaged DNA, such as SIRT1-deacetylated NBN can recruit ATM to initiate DNA repair and SIRT1-deacetylated XPA interacts with RPA2. Also involved in DNA repair of DNA double-strand breaks by homologous recombination and specifically single-strand annealing independently of XRCC6/Ku70 and NBN. Promotes DNA double-strand breaks by mediating deacetylation of SIRT6. Transcriptional suppression of XPC probably involves an E2F4:RBL2 suppressor complex and protein kinase B (AKT) signaling. Transcriptional suppression of TP73 probably involves E2F4 and PCAF. Deacetylates WRN thereby regulating its helicase and exonuclease activities and regulates WRN nuclear translocation in response to DNA damage. Deacetylates APEX1 at 'Lys-6' and 'Lys-7' and stimulates cellular AP endonuclease activity by promoting the association of APEX1 to XRCC1. Catalyzes deacetylation of ERCC4/XPF, thereby impairing interaction with ERCC1 and nucleotide excision repair (NER). Increases p53/TP53-mediated transcription-independent apoptosis by blocking nuclear translocation of cytoplasmic p53/TP53 and probably redirecting it to mitochondria. Deacetylates XRCC6/Ku70 at 'Lys-537' and 'Lys-540' causing it to sequester BAX away from mitochondria thereby inhibiting stress-induced apoptosis. Is involved in autophagy, presumably by deacetylating ATG5, ATG7 and MAP1LC3B/ATG8. Deacetylates AKT1 which leads to enhanced binding of AKT1 and PDK1 to PIP3 and promotes their activation. Proposed to play role in regulation of STK11/LBK1-dependent AMPK signaling pathways implicated in cellular senescence which seems to involve the regulation of the acetylation status of STK11/LBK1. Can deacetylate STK11/LBK1 and thereby increase its activity, cytoplasmic localization and association with STRAD; however, the relevance of such activity in normal cells is unclear. In endothelial cells is shown to inhibit STK11/LBK1 activity and to promote its degradation. Deacetylates SMAD7 at 'Lys-64' and 'Lys-70' thereby promoting its degradation. Deacetylates CIITA and augments its MHC class II transactivation and contributes to its stability. Deacetylates MECOM/EVI1. Deacetylates PML at 'Lys-487' and this deacetylation promotes PML control of PER2 nuclear localization. During the neurogenic transition, represses selective NOTCH1-target genes through histone deacetylation in a BCL6-dependent manner and leading to neuronal differentiation. Regulates the circadian expression of several core clock genes, including BMAL1, RORC, PER2 and CRY1 and plays a critical role in maintaining a controlled rhythmicity in histone acetylation, thereby contributing to circadian chromatin remodeling. Deacetylates BMAL1 and histones at the circadian gene promoters in order to facilitate repression by inhibitory components of the circadian oscillator. Deacetylates PER2, facilitating its ubiquitination and degradation by the proteasome. Protects cardiomyocytes against palmitate-induced apoptosis. Deacetylates XBP1 isoform 2; deacetylation decreases protein stability of XBP1 isoform 2 and inhibits its transcriptional activity. Deacetylates PCK1 and directs its activity toward phosphoenolpyruvate production promoting gluconeogenesis. Involved in the CCAR2-mediated regulation of PCK1 and NR1D1. Deacetylates CTNB1 at 'Lys-49'. In POMC (pro-opiomelanocortin) neurons, required for leptin-induced activation of PI3K signaling. Deacetylates SOX9; promoting SOX9 nuclear localization and transactivation activity. Involved in the regulation of centrosome duplication: Deacetylates CENATAC in G1 phase, allowing for SASS6 accumulation on the centrosome and subsequent procentriole assembly. Deacetylates NDC80/HEC1. In addition to protein deacetylase activity, also acts as a protein-lysine deacylase by mediating protein delactylation, depropionylation and decrotonylation. Mediates depropionylation of Osterix (SP7). Catalyzes decrotonylation of histones; it however does not represent a major histone decrotonylase. Mediates protein delactylation of TEAD1 and YAP1. Functionally, deacetylates 'Lys-382' of p53/TP53, however with lower activity than isoform 1. In combination, the two isoforms exert an additive effect. Isoform 2 regulates p53/TP53 expression and cellular stress response and is in turn repressed by p53/TP53 presenting a SIRT1 isoform-dependent auto-regulatory loop. Catalytically inactive 75SirT1 may be involved in regulation of apoptosis. May be involved in protecting chondrocytes from apoptotic death by associating with cytochrome C and interfering with apoptosome assembly. The chain is NAD-dependent protein deacetylase sirtuin-1 (Sirt1) from Mus musculus (Mouse).